The chain runs to 256 residues: Probable septum site-determining protein MinC (256 aa).

Residues 105–143 are disordered; sequence RRGATAKPEPADEAEPPVAAAAAEAVPEPAPELAPSAPT. The span at 120 to 142 shows a compositional bias: low complexity; sequence PPVAAAAAEAVPEPAPELAPSAP.

Belongs to the MinC family. In terms of assembly, interacts with MinD and FtsZ.

Its function is as follows. Cell division inhibitor that blocks the formation of polar Z ring septums. Rapidly oscillates between the poles of the cell to destabilize FtsZ filaments that have formed before they mature into polar Z rings. Prevents FtsZ polymerization. The chain is Probable septum site-determining protein MinC from Burkholderia vietnamiensis (strain G4 / LMG 22486) (Burkholderia cepacia (strain R1808)).